Reading from the N-terminus, the 363-residue chain is Pyrimidine monooxygenase RutA (363 aa).

Residues 49–50 (IK), Asn-115, Glu-124, 140–141 (RY), and Ser-190 each bind FMN.

It belongs to the NtaA/SnaA/DszA monooxygenase family. RutA subfamily.

The catalysed reaction is uracil + FMNH2 + NADH + O2 = (Z)-3-ureidoacrylate + FMN + NAD(+) + H2O + H(+). It carries out the reaction thymine + FMNH2 + NADH + O2 = (Z)-2-methylureidoacrylate + FMN + NAD(+) + H2O + H(+). In terms of biological role, catalyzes the pyrimidine ring opening between N-3 and C-4 by an unusual flavin hydroperoxide-catalyzed mechanism, adding oxygen atoms in the process to yield ureidoacrylate peracid, that immediately reacts with FMN forming ureidoacrylate and FMN-N(5)-oxide. The FMN-N(5)-oxide reacts spontaneously with NADH to produce FMN. Requires the flavin reductase RutF to regenerate FMN in vivo. This Escherichia coli O44:H18 (strain 042 / EAEC) protein is Pyrimidine monooxygenase RutA.